The chain runs to 156 residues: Transcription elongation factor GreA (156 aa).

The protein belongs to the GreA/GreB family.

Necessary for efficient RNA polymerase transcription elongation past template-encoded arresting sites. The arresting sites in DNA have the property of trapping a certain fraction of elongating RNA polymerases that pass through, resulting in locked ternary complexes. Cleavage of the nascent transcript by cleavage factors such as GreA or GreB allows the resumption of elongation from the new 3'terminus. GreA releases sequences of 2 to 3 nucleotides. The chain is Transcription elongation factor GreA from Thermomicrobium roseum (strain ATCC 27502 / DSM 5159 / P-2).